An 88-amino-acid chain; its full sequence is Apolipoprotein C-I (88 aa).

Positions 1 to 26 (MRLFLSLPVLVVVLAMVLEGPAPTQA) are cleaved as a signal peptide.

This sequence belongs to the apolipoprotein C1 family.

The protein resides in the secreted. Its function is as follows. Inhibitor of lipoprotein binding to the low density lipoprotein (LDL) receptor, LDL receptor-related protein, and very low density lipoprotein (VLDL) receptor. Associates with high density lipoproteins (HDL) and the triacylglycerol-rich lipoproteins in the plasma and makes up about 10% of the protein of the VLDL and 2% of that of HDL. Appears to interfere directly with fatty acid uptake and is also the major plasma inhibitor of cholesteryl ester transfer protein (CETP). Binds free fatty acids and reduces their intracellular esterification. Modulates the interaction of APOE with beta-migrating VLDL and inhibits binding of beta-VLDL to the LDL receptor-related protein. This Leptonychotes weddellii (Weddell seal) protein is Apolipoprotein C-I (APOC1).